Consider the following 249-residue polypeptide: 2,3-bisphosphoglycerate-dependent phosphoglycerate mutase (249 aa).

Residues Arg8 to Asn15, Thr21 to Gly22, Arg60, Glu87 to Tyr90, Lys98, Arg114 to Arg115, and Gly183 to Asn184 contribute to the substrate site. Catalysis depends on His9, which acts as the Tele-phosphohistidine intermediate. The active-site Proton donor/acceptor is the Glu87.

Belongs to the phosphoglycerate mutase family. BPG-dependent PGAM subfamily. As to quaternary structure, homodimer.

It catalyses the reaction (2R)-2-phosphoglycerate = (2R)-3-phosphoglycerate. It functions in the pathway carbohydrate degradation; glycolysis; pyruvate from D-glyceraldehyde 3-phosphate: step 3/5. Functionally, catalyzes the interconversion of 2-phosphoglycerate and 3-phosphoglycerate. In Aromatoleum aromaticum (strain DSM 19018 / LMG 30748 / EbN1) (Azoarcus sp. (strain EbN1)), this protein is 2,3-bisphosphoglycerate-dependent phosphoglycerate mutase.